Consider the following 1112-residue polypeptide: Cytosolic carboxypeptidase 4 (1112 aa).

Residues 291-345 (TTEPPHDLPEEDFEDDGDDEVDKDSDTEDGKVEDDDLETDVNKLSSKPGLDRPEE) form a disordered region. Acidic residues predominate over residues 299–329 (PEEDFEDDGDDEVDKDSDTEDGKVEDDDLET). Residues 732-1022 (YPYTYTALMT…HPVDGLQGLQ (291 aa)) form the Peptidase M14 domain. Residues histidine 804, glutamate 807, and histidine 901 each contribute to the Zn(2+) site. Residue glutamate 986 is the Proton donor/acceptor of the active site.

This sequence belongs to the peptidase M14 family. Interacts with MYLK. Interacts with TCF4. Zn(2+) serves as cofactor. Expressed in corneal endothelium.

Its subcellular location is the cytoplasm. The protein resides in the cytosol. The enzyme catalyses (L-glutamyl)(n+1)-gamma-L-glutamyl-L-glutamyl-[protein] + H2O = (L-glutamyl)(n)-gamma-L-glutamyl-L-glutamyl-[protein] + L-glutamate. The catalysed reaction is C-terminal L-alpha-aminoacyl-L-glutamyl-L-glutamyl-[tubulin] + H2O = C-terminal L-alpha-aminoacyl-L-glutamyl-[tubulin] + L-glutamate. Functionally, metallocarboxypeptidase that mediates deglutamylation of tubulin and non-tubulin target proteins. Catalyzes the removal of polyglutamate side chains present on the gamma-carboxyl group of glutamate residues within the C-terminal tail of tubulin protein. Specifically cleaves tubulin long-side-chains, while it is not able to remove the branching point glutamate. Also catalyzes the removal of polyglutamate residues from the carboxy-terminus of non-tubulin proteins such as MYLK. The chain is Cytosolic carboxypeptidase 4 from Homo sapiens (Human).